We begin with the raw amino-acid sequence, 632 residues long: Biosynthetic arginine decarboxylase (632 aa).

Lys-101 is subject to N6-(pyridoxal phosphate)lysine. 281 to 291 (FDVGGGLGVDY) lines the substrate pocket.

It belongs to the Orn/Lys/Arg decarboxylase class-II family. SpeA subfamily. It depends on Mg(2+) as a cofactor. The cofactor is pyridoxal 5'-phosphate.

The enzyme catalyses L-arginine + H(+) = agmatine + CO2. Its pathway is amine and polyamine biosynthesis; agmatine biosynthesis; agmatine from L-arginine: step 1/1. In terms of biological role, catalyzes the biosynthesis of agmatine from arginine. The polypeptide is Biosynthetic arginine decarboxylase (Salmonella agona (strain SL483)).